Consider the following 166-residue polypeptide: Large ribosomal subunit protein uL10 (166 aa).

This sequence belongs to the universal ribosomal protein uL10 family. As to quaternary structure, part of the ribosomal stalk of the 50S ribosomal subunit. The N-terminus interacts with L11 and the large rRNA to form the base of the stalk. The C-terminus forms an elongated spine to which L12 dimers bind in a sequential fashion forming a multimeric L10(L12)X complex.

Forms part of the ribosomal stalk, playing a central role in the interaction of the ribosome with GTP-bound translation factors. In Aeromonas hydrophila subsp. hydrophila (strain ATCC 7966 / DSM 30187 / BCRC 13018 / CCUG 14551 / JCM 1027 / KCTC 2358 / NCIMB 9240 / NCTC 8049), this protein is Large ribosomal subunit protein uL10.